Reading from the N-terminus, the 492-residue chain is Transcript termination protein OPG145 (492 aa).

One can recognise a Helicase ATP-binding domain in the interval 100–256 (MIELKRPLYI…NSIINIAKLS (157 aa)). 113 to 120 (LACGFGKT) provides a ligand contact to ATP. The short motif at 206-209 (DESH) is the DEAH box element.

This sequence belongs to the helicase family. Poxviruses subfamily. Interacts with OPG087. Might be part of a transcription complex composed at least of OPG087, OPG110, and OPG145.

It is found in the virion. In terms of biological role, DNA helicase which seems to act as a postreplicative transcription termination factor. Involved in ATP-dependent release of nascent RNA. Forms a stable complex with single-stranded DNA, and to a lesser extent RNA. The polypeptide is Transcript termination protein OPG145 (OPG145) (Cynomys gunnisoni (Gunnison's prairie dog)).